Here is a 160-residue protein sequence, read N- to C-terminus: Nuclear transcription factor Y subunit B-5 (160 aa).

A DNA-binding region spans residues 56–62 (LPIANVG). Positions 83–94 (MQECVSEFISFV) are subunit association domain (SAD).

This sequence belongs to the NFYB/HAP3 subunit family. Heterotrimeric transcription factor composed of three components, NF-YA, NF-YB and NF-YC. NF-YB and NF-YC must interact and dimerize for NF-YA association and DNA binding. In terms of tissue distribution, expressed in flowers and siliques.

The protein resides in the nucleus. In terms of biological role, component of the NF-Y/HAP transcription factor complex. The NF-Y complex stimulates the transcription of various genes by recognizing and binding to a CCAAT motif in promoters. The polypeptide is Nuclear transcription factor Y subunit B-5 (NFYB5) (Arabidopsis thaliana (Mouse-ear cress)).